A 926-amino-acid polypeptide reads, in one-letter code: Transcriptional activator protein acu-15 (926 aa).

A DNA-binding region (zn(2)-C6 fungal-type) is located at residues 24–51 (CDRCRSKKIRCDGIRPCCSQCANVGFEC). Disordered regions lie at residues 100–129 (KMHSNRSRSAEPPRSTPAAEIKRDSGTPAK), 602–649 (LPQS…SASL), and 667–801 (TPQH…TSTG). The span at 119–129 (EIKRDSGTPAK) shows a compositional bias: basic and acidic residues. Composition is skewed to low complexity over residues 623–632 (AQQGSPSPSA) and 669–681 (QHQQYQHQQLQQQ). Polar residues-rich tracts occupy residues 689 to 703 (ARSQTSFDNLRQKAQ) and 726 to 736 (RTSTGTQSTPN). Low complexity predominate over residues 740–792 (LSLSSPQSPVSPVQMRSQPHQLQQQQQQQPQPQQQQQQHQRSSIASSHSQQGQ).

The protein localises to the nucleus. Its function is as follows. Positive regulator of acetate induction. The sequence is that of Transcriptional activator protein acu-15 (acu-15) from Neurospora crassa (strain ATCC 24698 / 74-OR23-1A / CBS 708.71 / DSM 1257 / FGSC 987).